Here is an 87-residue protein sequence, read N- to C-terminus: Small ribosomal subunit protein bS20 (87 aa).

Positions 1–11 (MANIKSAKKRA) are enriched in basic residues. The segment at 1–27 (MANIKSAKKRAVQSEKRRQHNASQRSM) is disordered.

This sequence belongs to the bacterial ribosomal protein bS20 family.

Its function is as follows. Binds directly to 16S ribosomal RNA. This is Small ribosomal subunit protein bS20 from Actinobacillus succinogenes (strain ATCC 55618 / DSM 22257 / CCUG 43843 / 130Z).